The following is a 368-amino-acid chain: MSSLPDDLLLSIFARISRLYYPTLSLVSKSFRSLLASPDLYKARSLLGHTESCLYVCFHFDSGPNTHWFTLCRKPDGTLTNDTSKKKKSNGYVLATVPIPHSPPANFSSLVAVGSDIYNIGGSIYLGPSSSSVSILDSQSHMWREAPSLRVELMSHSASVLDRKIYVAGSYKDGNGDSNSCKNLFEVFDTKTQVWHPEPIPCSKTKGIFYSKSACIDGKFHVETTHGVVYAYKEGRWDKAIPTMFGMRASYSFCEINNVLFYIHRGVFRWYDTKLRMWRILKGLLGLPSLPENMFVRLADYGGKMAVLWEEDRPSCGAGGRDEMMIWCAVIALKRHLNFSFWGKVEWFDHVLTVPKQHVFVKALTASL.

The region spanning 1–44 is the F-box domain; the sequence is MSSLPDDLLLSIFARISRLYYPTLSLVSKSFRSLLASPDLYKAR. Kelch repeat units lie at residues 116–163, 165–218, and 260–304; these read DIYN…VLDR, IYVA…CIDG, and LFYI…YGGK.

This Arabidopsis thaliana (Mouse-ear cress) protein is F-box/kelch-repeat protein At5g51250.